The primary structure comprises 182 residues: Ribosome-recycling factor (182 aa).

It belongs to the RRF family.

It is found in the cytoplasm. Responsible for the release of ribosomes from messenger RNA at the termination of protein biosynthesis. May increase the efficiency of translation by recycling ribosomes from one round of translation to another. This is Ribosome-recycling factor from Hydrogenobaculum sp. (strain Y04AAS1).